The following is a 491-amino-acid chain: Protein nucleotidyltransferase YdiU (491 aa).

The ATP site is built by Gly88, Gly90, Arg91, Lys111, Asp123, Gly124, Arg174, and Arg181. Asp250 serves as the catalytic Proton acceptor. The Mg(2+) site is built by Asn251 and Asp260. Asp260 contacts ATP.

It belongs to the SELO family. Mg(2+) serves as cofactor. Requires Mn(2+) as cofactor.

It catalyses the reaction L-seryl-[protein] + ATP = 3-O-(5'-adenylyl)-L-seryl-[protein] + diphosphate. The enzyme catalyses L-threonyl-[protein] + ATP = 3-O-(5'-adenylyl)-L-threonyl-[protein] + diphosphate. It carries out the reaction L-tyrosyl-[protein] + ATP = O-(5'-adenylyl)-L-tyrosyl-[protein] + diphosphate. The catalysed reaction is L-histidyl-[protein] + UTP = N(tele)-(5'-uridylyl)-L-histidyl-[protein] + diphosphate. It catalyses the reaction L-seryl-[protein] + UTP = O-(5'-uridylyl)-L-seryl-[protein] + diphosphate. The enzyme catalyses L-tyrosyl-[protein] + UTP = O-(5'-uridylyl)-L-tyrosyl-[protein] + diphosphate. In terms of biological role, nucleotidyltransferase involved in the post-translational modification of proteins. It can catalyze the addition of adenosine monophosphate (AMP) or uridine monophosphate (UMP) to a protein, resulting in modifications known as AMPylation and UMPylation. The protein is Protein nucleotidyltransferase YdiU of Bradyrhizobium sp. (strain BTAi1 / ATCC BAA-1182).